Consider the following 242-residue polypeptide: Orotidine 5'-phosphate decarboxylase (242 aa).

Substrate contacts are provided by residues Asp-21, Lys-43, 71 to 80, Thr-124, Arg-185, Gln-195, Gly-215, and Arg-216; that span reads DLKFFDVPET. Catalysis depends on Lys-73, which acts as the Proton donor.

This sequence belongs to the OMP decarboxylase family. Type 1 subfamily. As to quaternary structure, homodimer.

The enzyme catalyses orotidine 5'-phosphate + H(+) = UMP + CO2. It participates in pyrimidine metabolism; UMP biosynthesis via de novo pathway; UMP from orotate: step 2/2. Its function is as follows. Catalyzes the decarboxylation of orotidine 5'-monophosphate (OMP) to uridine 5'-monophosphate (UMP). The sequence is that of Orotidine 5'-phosphate decarboxylase from Methylococcus capsulatus (strain ATCC 33009 / NCIMB 11132 / Bath).